The sequence spans 78 residues: Small ribosomal subunit protein uS17 (78 aa).

Belongs to the universal ribosomal protein uS17 family. Part of the 30S ribosomal subunit.

In terms of biological role, one of the primary rRNA binding proteins, it binds specifically to the 5'-end of 16S ribosomal RNA. This is Small ribosomal subunit protein uS17 from Maricaulis maris (strain MCS10) (Caulobacter maris).